The sequence spans 562 residues: Long-chain-fatty-acid--CoA ligase (562 aa).

It belongs to the ATP-dependent AMP-binding enzyme family. It depends on Mg(2+) as a cofactor.

The protein resides in the membrane. The enzyme catalyses a long-chain fatty acid + ATP + CoA = a long-chain fatty acyl-CoA + AMP + diphosphate. The protein operates within lipid metabolism; fatty acid beta-oxidation. Catalyzes the esterification, concomitant with transport, of exogenous long-chain fatty acids into metabolically active CoA thioesters for subsequent degradation or incorporation into phospholipids. This chain is Long-chain-fatty-acid--CoA ligase (fadD), found in Haemophilus influenzae (strain ATCC 51907 / DSM 11121 / KW20 / Rd).